The primary structure comprises 1136 residues: Collagen alpha-1(XIX) chain (1136 aa).

The signal sequence occupies residues 1-23; sequence MRHTGSWKLWTWVTTFLLPACTC. An N-linked (GlcNAc...) asparagine glycan is attached at Asn47. The region spanning 47–231 is the Laminin G-like domain; it reads NKSELSGFDL…LHQLRIYCNA (185 aa). Disordered stretches follow at residues 252-272, 289-673, 699-1005, and 1043-1136; these read DFGS…SSYL, EEAG…PGDP, GLKS…TPAD, and SAQA…AGGK. A compositionally biased stretch (low complexity) spans 254–266; it reads GSTTSSWGTSNTG. Residues 289–348 are triple-helical region 1 (COL1); sequence EEAGLPGTLRSIGHKGDKGEPGEHGLDGTPGLPGQKGEQGLEGIKGEIGEKGEPGAKGDS. Collagen-like domains are found at residues 292–346, 347–388, and 389–430; these read GLPG…GAKG, DSGL…ALTG, and SIGI…GLQG. Basic and acidic residues-rich tracts occupy residues 302–314 and 332–344; these read HKGD…EHGL and IKGE…EPGA. A triple-helical region 2 (COL2) region spans residues 367 to 426; it reads GPPGPKGDKGDMGPPGPPALTGSIGIQGPQGPPGKEGQRGRRGKTGPPGNPGPPGPPGPP. A compositionally biased stretch (low complexity) spans 387–401; that stretch reads TGSIGIQGPQGPPGK. The segment covering 414 to 426 has biased composition (pro residues); the sequence is PGNPGPPGPPGPP. A compositionally biased stretch (low complexity) spans 428 to 437; it reads LQGLQQPFGG. The segment at 442–682 is triple-helical region 3 (COL3); that stretch reads GTGEHGASGP…PIALPLLGDI (241 aa). Basic and acidic residues predominate over residues 472–490; it reads HKGEPGEPLTKGEKGDRGE. 2 stretches are compositionally biased toward low complexity: residues 511–523 and 567–577; these read LLGS…QQGP and PGLKGDAGPPG. Collagen-like domains follow at residues 519–577, 578–618, 620–673, 722–777, 778–810, and 833–891; these read GQQG…GPPG, ISLP…GPPG, GIPG…PGDP, KGDV…GPPG, LTGR…GPPG, and GYPG…APGP. The span at 634-645 shows a compositional bias: low complexity; sequence PGIQGPRGLPGL. Residues 694–812 form a triple-helical region 4 (COL4) region; sequence QANVPGLKSI…PGPPGPPGVP (119 aa). 2 stretches are compositionally biased toward basic and acidic residues: residues 714–725 and 737–758; these read GKYDPAARKGDV and EGPK…KGDE. Residues 764 to 788 show a composition bias toward low complexity; it reads PGLSGAPGPTGPPGLTGRTGHPGPT. 2 stretches are compositionally biased toward pro residues: residues 800 to 811 and 834 to 846; these read PGKPGPPGPPGV and YPGP…PKGD. Residues 827–1006 form a triple-helical region 5 (COL5) region; sequence GGVNVPGYPG…PGIPGTPADA (180 aa). The span at 877 to 886 shows a compositional bias: low complexity; the sequence is PGIAGISGKP. Residues 937-948 show a composition bias toward basic and acidic residues; sequence PGDRGPKGERGD. The short motif at 946 to 948 is the Cell attachment site element; it reads RGD. The interval 1048-1105 is triple-helical region 6 (COL6); the sequence is GRPGPPGKDGLPGPPGDPGPQGYRGQKGERGEPGIGLPGSPGLPGSSAVGLPGSPGAP. Residues 1087-1101 are compositionally biased toward low complexity; that stretch reads SPGLPGSSAVGLPGS. The segment covering 1102-1113 has biased composition (pro residues); sequence PGAPGPQGPPGP.

Belongs to the fibril-associated collagens with interrupted helices (FACIT) family. As to quaternary structure, oligomer; disulfide-linked. Post-translationally, prolines at the third position of the tripeptide repeating unit (G-X-Y) are hydroxylated in some or all of the chains.

Its subcellular location is the secreted. It is found in the extracellular space. The protein localises to the extracellular matrix. May act as a cross-bridge between fibrils and other extracellular matrix molecules. Involved in skeletal myogenesis in the developing esophagus. May play a role in organization of the pericellular matrix or the sphinteric smooth muscle. The chain is Collagen alpha-1(XIX) chain from Mus musculus (Mouse).